The sequence spans 254 residues: Alcohol dehydrogenase (254 aa).

Residue 10–33 (FVAGLGGIGLDTSRELVKRNLKNL) participates in NAD(+) binding. Substrate is bound at residue serine 138. Residue tyrosine 151 is the Proton acceptor of the active site.

It belongs to the short-chain dehydrogenases/reductases (SDR) family. As to quaternary structure, homodimer.

The catalysed reaction is a primary alcohol + NAD(+) = an aldehyde + NADH + H(+). It carries out the reaction a secondary alcohol + NAD(+) = a ketone + NADH + H(+). This chain is Alcohol dehydrogenase (Adh), found in Drosophila pseudoobscura pseudoobscura (Fruit fly).